Here is a 132-residue protein sequence, read N- to C-terminus: Small ribosomal subunit protein uS8 (132 aa).

This sequence belongs to the universal ribosomal protein uS8 family. In terms of assembly, part of the 30S ribosomal subunit. Contacts proteins S5 and S12.

One of the primary rRNA binding proteins, it binds directly to 16S rRNA central domain where it helps coordinate assembly of the platform of the 30S subunit. The protein is Small ribosomal subunit protein uS8 of Francisella philomiragia subsp. philomiragia (strain ATCC 25017 / CCUG 19701 / FSC 153 / O#319-036).